A 68-amino-acid polypeptide reads, in one-letter code: Large ribosomal subunit protein bL33c (68 aa).

The protein belongs to the bacterial ribosomal protein bL33 family.

It localises to the plastid. The chain is Large ribosomal subunit protein bL33c from Cuscuta reflexa (Southern Asian dodder).